The chain runs to 183 residues: Shikimate kinase (183 aa).

Position 25 to 30 (25 to 30) interacts with ATP; sequence GAGKTT. T29 serves as a coordination point for Mg(2+). Residues D47, R71, and G93 each coordinate substrate. R131 contributes to the ATP binding site. A substrate-binding site is contributed by R150.

It belongs to the shikimate kinase family. As to quaternary structure, monomer. Mg(2+) serves as cofactor.

Its subcellular location is the cytoplasm. It catalyses the reaction shikimate + ATP = 3-phosphoshikimate + ADP + H(+). It functions in the pathway metabolic intermediate biosynthesis; chorismate biosynthesis; chorismate from D-erythrose 4-phosphate and phosphoenolpyruvate: step 5/7. In terms of biological role, catalyzes the specific phosphorylation of the 3-hydroxyl group of shikimic acid using ATP as a cosubstrate. This is Shikimate kinase from Dechloromonas aromatica (strain RCB).